Here is a 347-residue protein sequence, read N- to C-terminus: Quinolinate synthase (347 aa).

Positions 47 and 68 each coordinate iminosuccinate. Cys113 is a binding site for [4Fe-4S] cluster. Residues 139 to 141 (YAN) and Ser156 each bind iminosuccinate. Cys200 is a binding site for [4Fe-4S] cluster. Iminosuccinate-binding positions include 226–228 (HPE) and Thr243. Cys297 lines the [4Fe-4S] cluster pocket.

Belongs to the quinolinate synthase family. Type 1 subfamily. Requires [4Fe-4S] cluster as cofactor.

The protein resides in the cytoplasm. It catalyses the reaction iminosuccinate + dihydroxyacetone phosphate = quinolinate + phosphate + 2 H2O + H(+). It functions in the pathway cofactor biosynthesis; NAD(+) biosynthesis; quinolinate from iminoaspartate: step 1/1. Functionally, catalyzes the condensation of iminoaspartate with dihydroxyacetone phosphate to form quinolinate. The protein is Quinolinate synthase of Shigella boydii serotype 4 (strain Sb227).